The chain runs to 358 residues: Alanine racemase, biosynthetic (358 aa).

The Proton acceptor; specific for D-alanine role is filled by Lys34. Lys34 bears the N6-(pyridoxal phosphate)lysine mark. Position 130 (Arg130) interacts with substrate. Catalysis depends on Tyr254, which acts as the Proton acceptor; specific for L-alanine. Residue Met302 coordinates substrate.

The protein belongs to the alanine racemase family. The cofactor is pyridoxal 5'-phosphate.

It catalyses the reaction L-alanine = D-alanine. The protein operates within amino-acid biosynthesis; D-alanine biosynthesis; D-alanine from L-alanine: step 1/1. Its pathway is cell wall biogenesis; peptidoglycan biosynthesis. Catalyzes the interconversion of L-alanine and D-alanine. Provides the D-alanine required for cell wall biosynthesis. In Pseudomonas aeruginosa (strain ATCC 15692 / DSM 22644 / CIP 104116 / JCM 14847 / LMG 12228 / 1C / PRS 101 / PAO1), this protein is Alanine racemase, biosynthetic (alr).